Consider the following 1109-residue polypeptide: Ankyrin repeat- and BTB/POZ domain-containing protein 3 (1109 aa).

Residues 168–188 (IVLSWGLAAHCTAAALAALSL) traverse the membrane as a helical segment. The disordered stretch occupies residues 260 to 302 (SCSGPGPGSSSGSGPGPGSGPGAPAADKERETPGGGAASGGPC). The segment covering 264 to 280 (PGPGSSSGSGPGPGSGP) has biased composition (gly residues). ANK repeat units lie at residues 608–637 (QGMT…DLNV), 654–683 (RHWT…KVEG), 692–721 (YSET…DPLI), 735–764 (GDMN…KEKS), and 830–859 (TWLE…TIQE). The BTB domain occupies 928-994 (SDVTFLVEGR…LYYGGPESLL (67 aa)).

It is found in the membrane. The protein is Ankyrin repeat- and BTB/POZ domain-containing protein 3 (Abtb3) of Mus musculus (Mouse).